The sequence spans 156 residues: ATP synthase subunit b (156 aa).

The helical transmembrane segment at 7-29 (LLGQAISFALFVWFCMKYVWPPL) threads the bilayer.

Belongs to the ATPase B chain family. As to quaternary structure, F-type ATPases have 2 components, F(1) - the catalytic core - and F(0) - the membrane proton channel. F(1) has five subunits: alpha(3), beta(3), gamma(1), delta(1), epsilon(1). F(0) has three main subunits: a(1), b(2) and c(10-14). The alpha and beta chains form an alternating ring which encloses part of the gamma chain. F(1) is attached to F(0) by a central stalk formed by the gamma and epsilon chains, while a peripheral stalk is formed by the delta and b chains.

The protein localises to the cell inner membrane. In terms of biological role, f(1)F(0) ATP synthase produces ATP from ADP in the presence of a proton or sodium gradient. F-type ATPases consist of two structural domains, F(1) containing the extramembraneous catalytic core and F(0) containing the membrane proton channel, linked together by a central stalk and a peripheral stalk. During catalysis, ATP synthesis in the catalytic domain of F(1) is coupled via a rotary mechanism of the central stalk subunits to proton translocation. Component of the F(0) channel, it forms part of the peripheral stalk, linking F(1) to F(0). This chain is ATP synthase subunit b, found in Vibrio alginolyticus.